The chain runs to 236 residues: Uridylate kinase (236 aa).

10-13 (KLSG) is a binding site for ATP. Glycine 52 is a binding site for UMP. 2 residues coordinate ATP: glycine 53 and arginine 57. UMP is bound by residues aspartate 72 and 133 to 140 (TGNPFFTT). 3 residues coordinate ATP: threonine 160, tyrosine 166, and aspartate 169.

Belongs to the UMP kinase family. In terms of assembly, homohexamer.

Its subcellular location is the cytoplasm. It catalyses the reaction UMP + ATP = UDP + ADP. It participates in pyrimidine metabolism; CTP biosynthesis via de novo pathway; UDP from UMP (UMPK route): step 1/1. Inhibited by UTP. Catalyzes the reversible phosphorylation of UMP to UDP. The protein is Uridylate kinase of Cupriavidus pinatubonensis (strain JMP 134 / LMG 1197) (Cupriavidus necator (strain JMP 134)).